A 461-amino-acid chain; its full sequence is Siroheme synthase (461 aa).

The segment at 1–204 (MRYLPLFVYL…GNFRKANRVI (204 aa)) is precorrin-2 dehydrogenase /sirohydrochlorin ferrochelatase. Residues 22-23 (IV) and 43-44 (KT) contribute to the NAD(+) site. S128 bears the Phosphoserine mark. Residues 218–461 (GSVSLVGAGP…HNEISWFGNG (244 aa)) form a uroporphyrinogen-III C-methyltransferase region. P227 is an S-adenosyl-L-methionine binding site. The active-site Proton acceptor is the D250. K272 acts as the Proton donor in catalysis. S-adenosyl-L-methionine contacts are provided by residues 303 to 305 (GGD), I308, M386, and G415.

It in the N-terminal section; belongs to the precorrin-2 dehydrogenase / sirohydrochlorin ferrochelatase family. In the C-terminal section; belongs to the precorrin methyltransferase family.

The enzyme catalyses uroporphyrinogen III + 2 S-adenosyl-L-methionine = precorrin-2 + 2 S-adenosyl-L-homocysteine + H(+). It carries out the reaction precorrin-2 + NAD(+) = sirohydrochlorin + NADH + 2 H(+). It catalyses the reaction siroheme + 2 H(+) = sirohydrochlorin + Fe(2+). It functions in the pathway cofactor biosynthesis; adenosylcobalamin biosynthesis; precorrin-2 from uroporphyrinogen III: step 1/1. The protein operates within cofactor biosynthesis; adenosylcobalamin biosynthesis; sirohydrochlorin from precorrin-2: step 1/1. It participates in porphyrin-containing compound metabolism; siroheme biosynthesis; precorrin-2 from uroporphyrinogen III: step 1/1. Its pathway is porphyrin-containing compound metabolism; siroheme biosynthesis; siroheme from sirohydrochlorin: step 1/1. It functions in the pathway porphyrin-containing compound metabolism; siroheme biosynthesis; sirohydrochlorin from precorrin-2: step 1/1. In terms of biological role, multifunctional enzyme that catalyzes the SAM-dependent methylations of uroporphyrinogen III at position C-2 and C-7 to form precorrin-2 via precorrin-1. Then it catalyzes the NAD-dependent ring dehydrogenation of precorrin-2 to yield sirohydrochlorin. Finally, it catalyzes the ferrochelation of sirohydrochlorin to yield siroheme. The sequence is that of Siroheme synthase from Blochmanniella floridana.